The chain runs to 389 residues: Alanine racemase TOXG (389 aa).

Residue K235 is modified to N6-(pyridoxal phosphate)lysine.

Belongs to the threonine aldolase family. Pyridoxal 5'-phosphate is required as a cofactor.

The catalysed reaction is L-alanine = D-alanine. It functions in the pathway mycotoxin biosynthesis; HC-toxin biosynthesis. In terms of biological role, alanine racemase, part of the diffuse TOX2 gene cluster that mediates the biosynthesis of the HC-toxin, cyclic tetrapeptide of structure cyclo(D-Pro-L-Ala-D-Ala-L-Aeo), where Aeo stands for 2-amino-9,10-epoxi-8-oxodecanoic acid. HC-toxin is a determinant of specificity and virulence in the interaction between the producing fungus and its host, maize. TOXG catalyzes the conversion of L-alanine into D-alanine, an essential precursor for the production of the major forms of HC-toxin by the non-ribosomal peptide synthetase HTS1. In Cochliobolus carbonum (Maize leaf spot fungus), this protein is Alanine racemase TOXG.